A 158-amino-acid chain; its full sequence is Endoribonuclease YbeY (158 aa).

3 residues coordinate Zn(2+): H119, H123, and D129.

It belongs to the endoribonuclease YbeY family. Zn(2+) serves as cofactor.

The protein resides in the cytoplasm. Single strand-specific metallo-endoribonuclease involved in late-stage 70S ribosome quality control and in maturation of the 3' terminus of the 16S rRNA. The protein is Endoribonuclease YbeY of Chlamydia abortus (strain DSM 27085 / S26/3) (Chlamydophila abortus).